A 283-amino-acid polypeptide reads, in one-letter code: Phosphatidylserine decarboxylase proenzyme (283 aa).

Catalysis depends on charge relay system; for autoendoproteolytic cleavage activity residues D96, H152, and S250. Residue S250 is the Schiff-base intermediate with substrate; via pyruvic acid; for decarboxylase activity of the active site. Residue S250 is modified to Pyruvic acid (Ser); by autocatalysis.

Belongs to the phosphatidylserine decarboxylase family. PSD-B subfamily. Prokaryotic type I sub-subfamily. As to quaternary structure, heterodimer of a large membrane-associated beta subunit and a small pyruvoyl-containing alpha subunit. The cofactor is pyruvate. In terms of processing, is synthesized initially as an inactive proenzyme. Formation of the active enzyme involves a self-maturation process in which the active site pyruvoyl group is generated from an internal serine residue via an autocatalytic post-translational modification. Two non-identical subunits are generated from the proenzyme in this reaction, and the pyruvate is formed at the N-terminus of the alpha chain, which is derived from the carboxyl end of the proenzyme. The autoendoproteolytic cleavage occurs by a canonical serine protease mechanism, in which the side chain hydroxyl group of the serine supplies its oxygen atom to form the C-terminus of the beta chain, while the remainder of the serine residue undergoes an oxidative deamination to produce ammonia and the pyruvoyl prosthetic group on the alpha chain. During this reaction, the Ser that is part of the protease active site of the proenzyme becomes the pyruvoyl prosthetic group, which constitutes an essential element of the active site of the mature decarboxylase.

The protein resides in the cell membrane. The catalysed reaction is a 1,2-diacyl-sn-glycero-3-phospho-L-serine + H(+) = a 1,2-diacyl-sn-glycero-3-phosphoethanolamine + CO2. Its pathway is phospholipid metabolism; phosphatidylethanolamine biosynthesis; phosphatidylethanolamine from CDP-diacylglycerol: step 2/2. In terms of biological role, catalyzes the formation of phosphatidylethanolamine (PtdEtn) from phosphatidylserine (PtdSer). In Acinetobacter baumannii (strain SDF), this protein is Phosphatidylserine decarboxylase proenzyme.